Reading from the N-terminus, the 97-residue chain is Small ribosomal subunit protein uS19 (97 aa).

The interval 74–97 is disordered; sequence FSPTRRFGGHPDKKAVKGKIEKQG. The span at 82–97 shows a compositional bias: basic and acidic residues; it reads GHPDKKAVKGKIEKQG.

This sequence belongs to the universal ribosomal protein uS19 family.

In terms of biological role, protein S19 forms a complex with S13 that binds strongly to the 16S ribosomal RNA. This Petrotoga mobilis (strain DSM 10674 / SJ95) protein is Small ribosomal subunit protein uS19.